The primary structure comprises 182 residues: Probable phosphoheptose isomerase (182 aa).

The region spanning 29–182 (ISSAISSGNK…MICAMIDEKF (154 aa)) is the SIS domain. Residue 44 to 46 (NGG) participates in substrate binding. Zn(2+)-binding residues include histidine 53 and glutamate 57. Residues glutamate 57, 86-87 (ND), 112-114 (STS), serine 117, and glutamine 164 contribute to the substrate site. Glutamine 164 and histidine 172 together coordinate Zn(2+).

This sequence belongs to the SIS family. GmhA subfamily. The cofactor is Zn(2+).

The protein resides in the cytoplasm. The enzyme catalyses 2 D-sedoheptulose 7-phosphate = D-glycero-alpha-D-manno-heptose 7-phosphate + D-glycero-beta-D-manno-heptose 7-phosphate. It functions in the pathway carbohydrate biosynthesis; D-glycero-D-manno-heptose 7-phosphate biosynthesis; D-glycero-alpha-D-manno-heptose 7-phosphate and D-glycero-beta-D-manno-heptose 7-phosphate from sedoheptulose 7-phosphate: step 1/1. In terms of biological role, catalyzes the isomerization of sedoheptulose 7-phosphate in D-glycero-D-manno-heptose 7-phosphate. The polypeptide is Probable phosphoheptose isomerase (Thermoplasma acidophilum (strain ATCC 25905 / DSM 1728 / JCM 9062 / NBRC 15155 / AMRC-C165)).